The following is a 218-amino-acid chain: Small ribosomal subunit protein uS3 (218 aa).

The KH type-2 domain occupies 38–106 (IREFINQRLS…RVHINILEIK (69 aa)).

Belongs to the universal ribosomal protein uS3 family. Part of the 30S ribosomal subunit. Forms a tight complex with proteins S10 and S14.

In terms of biological role, binds the lower part of the 30S subunit head. Binds mRNA in the 70S ribosome, positioning it for translation. This is Small ribosomal subunit protein uS3 from Bacillus licheniformis (strain ATCC 14580 / DSM 13 / JCM 2505 / CCUG 7422 / NBRC 12200 / NCIMB 9375 / NCTC 10341 / NRRL NRS-1264 / Gibson 46).